Here is a 238-residue protein sequence, read N- to C-terminus: tRNA (guanine-N(1)-)-methyltransferase (238 aa).

Residues G110 and 129-134 contribute to the S-adenosyl-L-methionine site; that span reads LGDFIL.

Belongs to the RNA methyltransferase TrmD family. Homodimer.

It localises to the cytoplasm. It catalyses the reaction guanosine(37) in tRNA + S-adenosyl-L-methionine = N(1)-methylguanosine(37) in tRNA + S-adenosyl-L-homocysteine + H(+). Specifically methylates guanosine-37 in various tRNAs. In Clostridium botulinum (strain Alaska E43 / Type E3), this protein is tRNA (guanine-N(1)-)-methyltransferase.